The following is a 202-amino-acid chain: Matrix protein (202 aa).

Residues 35 to 38 (PPES) carry the PPXY motif motif. The essential for glycoprotein binding stretch occupies residues 115 to 151 (KIRRTLVFQWAESRGPLDGEELEYSQEITWDDDSEFI).

It belongs to the lyssavirus matrix protein family. Homomultimer. Interacts with nucleoprotein and with the cytoplasmic domain of glycoprotein.

It is found in the virion membrane. The protein localises to the host endomembrane system. Functionally, plays a major role in assembly and budding of virion. Completely covers the ribonucleoprotein coil and keep it in condensed bullet-shaped form. Inhibits viral transcription and stimulates replication. Plays a major role in early induction of TRAIL-mediated apoptosis in infected neurons. The chain is Matrix protein (M) from Myotis mystacinus (Whiskered bat).